A 41-amino-acid chain; its full sequence is U-AITX-Bg1a (41 aa).

Disulfide bonds link Cys2–Cys35, Cys4–Cys28, and Cys18–Cys36.

The protein belongs to the sea anemone type 3 (BDS) potassium channel toxin family.

It localises to the secreted. Its subcellular location is the nematocyst. Functionally, potently and selectively inhibits voltage-gated potassium channels Kv11/KCNH/ERG. Acts as a gating-modifier toxin that shifts the voltage-dependence of ERG activation in the positive direction and suppresses its current amplitudes elicited by strong depolarizing pulses that maximally activate the channels. The polypeptide is U-AITX-Bg1a (Bunodosoma granuliferum (Red warty sea anemone)).